Reading from the N-terminus, the 245-residue chain is tRNA1(Val) (adenine(37)-N6)-methyltransferase (245 aa).

It belongs to the methyltransferase superfamily. tRNA (adenine-N(6)-)-methyltransferase family.

The protein resides in the cytoplasm. It catalyses the reaction adenosine(37) in tRNA1(Val) + S-adenosyl-L-methionine = N(6)-methyladenosine(37) in tRNA1(Val) + S-adenosyl-L-homocysteine + H(+). Functionally, specifically methylates the adenine in position 37 of tRNA(1)(Val) (anticodon cmo5UAC). In Escherichia coli O157:H7, this protein is tRNA1(Val) (adenine(37)-N6)-methyltransferase.